The primary structure comprises 131 residues: Small ribosomal subunit protein uS8 (131 aa).

It belongs to the universal ribosomal protein uS8 family. In terms of assembly, part of the 30S ribosomal subunit. Contacts proteins S5 and S12.

Functionally, one of the primary rRNA binding proteins, it binds directly to 16S rRNA central domain where it helps coordinate assembly of the platform of the 30S subunit. This Ruminiclostridium cellulolyticum (strain ATCC 35319 / DSM 5812 / JCM 6584 / H10) (Clostridium cellulolyticum) protein is Small ribosomal subunit protein uS8.